We begin with the raw amino-acid sequence, 161 residues long: Protein yippee-like B0546.4 (161 aa).

A Yippee domain is found at 14-111 (SLYGCVVCNT…IENANFEKIA (98 aa)). Residues Cys-18, Cys-21, Cys-74, and Cys-77 each contribute to the Zn(2+) site. Residues 117 to 161 (PLGEDRQEAPPAPNLEMSRYPLEAEKKSRPQYRTVSVSSSSSAEC) are disordered. Over residues 151–161 (VSVSSSSSAEC) the composition is skewed to low complexity.

It belongs to the yippee family.

This chain is Protein yippee-like B0546.4, found in Caenorhabditis elegans.